Here is a 236-residue protein sequence, read N- to C-terminus: 2-C-methyl-D-erythritol 4-phosphate cytidylyltransferase (236 aa).

Belongs to the IspD/TarI cytidylyltransferase family. IspD subfamily.

The catalysed reaction is 2-C-methyl-D-erythritol 4-phosphate + CTP + H(+) = 4-CDP-2-C-methyl-D-erythritol + diphosphate. It participates in isoprenoid biosynthesis; isopentenyl diphosphate biosynthesis via DXP pathway; isopentenyl diphosphate from 1-deoxy-D-xylulose 5-phosphate: step 2/6. Functionally, catalyzes the formation of 4-diphosphocytidyl-2-C-methyl-D-erythritol from CTP and 2-C-methyl-D-erythritol 4-phosphate (MEP). The chain is 2-C-methyl-D-erythritol 4-phosphate cytidylyltransferase from Paraburkholderia phymatum (strain DSM 17167 / CIP 108236 / LMG 21445 / STM815) (Burkholderia phymatum).